Consider the following 239-residue polypeptide: Ribosomal RNA small subunit methyltransferase G (239 aa).

Residues glycine 76, phenylalanine 81, 99–101 (DSS), 128–129 (IE), and arginine 147 each bind S-adenosyl-L-methionine.

This sequence belongs to the methyltransferase superfamily. RNA methyltransferase RsmG family.

The protein localises to the cytoplasm. Functionally, specifically methylates the N7 position of a guanine in 16S rRNA. The polypeptide is Ribosomal RNA small subunit methyltransferase G (Prochlorococcus marinus (strain MIT 9515)).